Reading from the N-terminus, the 962-residue chain is Spliceosome associated factor 3, U4/U6 recycling protein (962 aa).

The segment covering 1–21 (MATTAASSASEPEVEPQAGPE) has biased composition (low complexity). Positions 1–92 (MATTAASSAS…EDEWEYDEEE (92 aa)) are disordered. The residue at position 2 (A2) is an N-acetylalanine. The tract at residues 2–352 (ATTAASSASE…LVPDLWIRYS (351 aa)) is mediates interaction with PRPF3. The residue at position 10 (S10) is a Phosphoserine. Over residues 81–92 (AGEDEWEYDEEE) the composition is skewed to acidic residues. HAT repeat units lie at residues 127–159 (GELS…DEIS), 165–196 (LDRE…YSVG), 202–238 (GGLE…FESA), 243–276 (ARLE…WSEE), 325–357 (GDPA…YLDR), 360–392 (KVKD…AMER), 395–431 (LDHQ…YLRR), 441–474 (KELE…PSCL), and 488–521 (NNMQ…LERA). Residue S216 is modified to Phosphoserine. The interval 488–521 (NNMQKARELWDSIMTRGNAKYANMWLEYYNLERA) is required for interaction with USP4. Residues 538–952 (CTSDYPEHVC…VATEAPKMSN (415 aa)) form a necessary and sufficient for U6 snRNA binding region. Positions 559–618 (TLEDWDLAIQKTETRLARVNEQRMKAAEKEAALVQQEEEKAEQRKKVRAEKKALKKKKKT) form a coiled coil. The segment covering 591-602 (LVQQEEEKAEQR) has biased composition (basic and acidic residues). Residues 591-696 (LVQQEEEKAE…SLKRDMPKVA (106 aa)) form a disordered region. The interval 601 to 670 (QRKKVRAEKK…KEETELSGKC (70 aa)) is required for nuclear localization. The Nuclear localization signal motif lies at 602–609 (RKKVRAEK). Over residues 603-618 (KKVRAEKKALKKKKKT) the composition is skewed to basic residues. Residues 627-640 (DEDEENEWGEEEEE) are compositionally biased toward acidic residues. S651 bears the Phosphoserine mark. A compositionally biased stretch (basic and acidic residues) spans 680–696 (KQKEKAASLKRDMPKVA). An RRM 1 domain is found at 704-782 (VTVFVSNLPY…RPMFVSPCVD (79 aa)). Phosphoserine is present on residues S795 and S852. In terms of domain architecture, RRM 2 spans 801-878 (HKLFISGLPF…NVIKVAISNP (78 aa)). The tract at residues 880-962 (QRKVPEKPEV…ADFAKLLLRK (83 aa)) is disordered. Residue R906 is modified to Omega-N-methylarginine.

Component of the 7SK snRNP complex at least composed of P-TEFb (composed of CDK9 and CCNT1/cyclin-T1), HEXIM1, HEXIM2, BCDIN3, SART3 proteins and 7SK and U6 snRNAs. Interacts with AGO1 and AGO2. Interacts with PRPF3 and USP4; the interaction with PRPF3 is direct and recruits USP4 to its substrate PRPF3. Interacts with USP15; the interaction is direct. In terms of tissue distribution, ubiquitously expressed, with low level of expression in liver, heart and skeletal. Also detected in hematopoietic cells (at protein level).

It is found in the nucleus. Its subcellular location is the nucleoplasm. It localises to the cajal body. The protein resides in the nucleus speckle. The protein localises to the cytoplasm. U6 snRNP-binding protein that functions as a recycling factor of the splicing machinery. Promotes the initial reassembly of U4 and U6 snRNPs following their ejection from the spliceosome during its maturation. Also binds U6atac snRNPs and may function as a recycling factor for U4atac/U6atac spliceosomal snRNP, an initial step in the assembly of U12-type spliceosomal complex. The U12-type spliceosomal complex plays a role in the splicing of introns with non-canonical splice sites. May also function as a substrate-targeting factor for deubiquitinases like USP4 and USP15. Recruits USP4 to ubiquitinated PRPF3 within the U4/U5/U6 tri-snRNP complex, promoting PRPF3 deubiquitination and thereby regulating the spliceosome U4/U5/U6 tri-snRNP spliceosomal complex disassembly. May also recruit the deubiquitinase USP15 to histone H2B and mediate histone deubiquitination, thereby regulating gene expression and/or DNA repair. May play a role in hematopoiesis probably through transcription regulation of specific genes including MYC. This is Spliceosome associated factor 3, U4/U6 recycling protein from Mus musculus (Mouse).